We begin with the raw amino-acid sequence, 316 residues long: MTDTTSKTRAGFAAIIGAPNAGKSTLVNRMVGAKVSIVTQKVQTTRFPVRGVAIEGDTQIVLVDTPGIFSPRRRLDRAMVRAAWAGSEEAEATVHLVDVQAELASRADKATPGEYRSAQDVQTIIEGLKAADRKVILALNKIDGIKRDTLLAVAKDFFDTGVYSDVFMISASTGAGVEDLTAKLVSMMPEGPWLYPEDQTADLPARLLAAEITREKVYLRVHEELPYAATVETTAFEERKDGSVRIEQTILVEREGQRVIVIGKGGQTLKWIGQASREELCDILDRKVHLFLHVKVKENWAEERGLFSDIGLDFDV.

The Era-type G domain occupies 9-190 (RAGFAAIIGA…TAKLVSMMPE (182 aa)). Residues 17–24 (GAPNAGKS) are G1. 17 to 24 (GAPNAGKS) provides a ligand contact to GTP. The G2 stretch occupies residues 43–47 (QTTRF). A G3 region spans residues 64 to 67 (DTPG). Residues 64-68 (DTPGI) and 140-143 (NKID) contribute to the GTP site. Residues 140–143 (NKID) are G4. Residues 169–171 (ISA) form a G5 region. The region spanning 221–298 (VHEELPYAAT…HLFLHVKVKE (78 aa)) is the KH type-2 domain.

Belongs to the TRAFAC class TrmE-Era-EngA-EngB-Septin-like GTPase superfamily. Era GTPase family. In terms of assembly, monomer.

Its subcellular location is the cytoplasm. It localises to the cell inner membrane. In terms of biological role, an essential GTPase that binds both GDP and GTP, with rapid nucleotide exchange. Plays a role in 16S rRNA processing and 30S ribosomal subunit biogenesis and possibly also in cell cycle regulation and energy metabolism. The sequence is that of GTPase Era from Caulobacter vibrioides (strain ATCC 19089 / CIP 103742 / CB 15) (Caulobacter crescentus).